We begin with the raw amino-acid sequence, 349 residues long: Holliday junction branch migration complex subunit RuvB (349 aa).

A large ATPase domain (RuvB-L) region spans residues Met-1 to Tyr-185. Residues Leu-24, Arg-25, Gly-66, Lys-69, Thr-70, Thr-71, Glu-132–Tyr-134, Arg-175, Tyr-185, and Arg-222 each bind ATP. Residue Thr-70 coordinates Mg(2+). The small ATPAse domain (RuvB-S) stretch occupies residues Asp-186 to Glu-256. The tract at residues Lys-259 to Ser-349 is head domain (RuvB-H). The DNA site is built by Arg-314 and Arg-319.

It belongs to the RuvB family. As to quaternary structure, homohexamer. Forms an RuvA(8)-RuvB(12)-Holliday junction (HJ) complex. HJ DNA is sandwiched between 2 RuvA tetramers; dsDNA enters through RuvA and exits via RuvB. An RuvB hexamer assembles on each DNA strand where it exits the tetramer. Each RuvB hexamer is contacted by two RuvA subunits (via domain III) on 2 adjacent RuvB subunits; this complex drives branch migration. In the full resolvosome a probable DNA-RuvA(4)-RuvB(12)-RuvC(2) complex forms which resolves the HJ.

Its subcellular location is the cytoplasm. The enzyme catalyses ATP + H2O = ADP + phosphate + H(+). In terms of biological role, the RuvA-RuvB-RuvC complex processes Holliday junction (HJ) DNA during genetic recombination and DNA repair, while the RuvA-RuvB complex plays an important role in the rescue of blocked DNA replication forks via replication fork reversal (RFR). RuvA specifically binds to HJ cruciform DNA, conferring on it an open structure. The RuvB hexamer acts as an ATP-dependent pump, pulling dsDNA into and through the RuvAB complex. RuvB forms 2 homohexamers on either side of HJ DNA bound by 1 or 2 RuvA tetramers; 4 subunits per hexamer contact DNA at a time. Coordinated motions by a converter formed by DNA-disengaged RuvB subunits stimulates ATP hydrolysis and nucleotide exchange. Immobilization of the converter enables RuvB to convert the ATP-contained energy into a lever motion, pulling 2 nucleotides of DNA out of the RuvA tetramer per ATP hydrolyzed, thus driving DNA branch migration. The RuvB motors rotate together with the DNA substrate, which together with the progressing nucleotide cycle form the mechanistic basis for DNA recombination by continuous HJ branch migration. Branch migration allows RuvC to scan DNA until it finds its consensus sequence, where it cleaves and resolves cruciform DNA. The protein is Holliday junction branch migration complex subunit RuvB of Dehalococcoides mccartyi (strain CBDB1).